We begin with the raw amino-acid sequence, 219 residues long: MTDQNQKANQGNGLQTTNLQAHAQRKHNLRPSSEGIKKAVSKKEGGGHNRNNQNRRFQKPAFKSEFEERIVKLKRISKTTKGGRNMRFSVLVVVGNRKGKIGYGIAKALEVPNAIKKAIKAAHNSLHTIEIHKGSIYHEVIGRSGASRVLLKPAPQGTGIIAGGAIRAIIELAGYSDIYTKNLGRNTPINMIHATMDGILKQLSPRRVAILRNKNLNEL.

A compositionally biased stretch (polar residues) spans 1–21 (MTDQNQKANQGNGLQTTNLQA). The interval 1 to 61 (MTDQNQKANQ…NQNRRFQKPA (61 aa)) is disordered. The segment covering 35–47 (GIKKAVSKKEGGG) has biased composition (basic and acidic residues). In terms of domain architecture, S5 DRBM spans 66–129 (FEERIVKLKR…KAAHNSLHTI (64 aa)).

It belongs to the universal ribosomal protein uS5 family. In terms of assembly, part of the 30S ribosomal subunit. Contacts proteins S4 and S8.

In terms of biological role, with S4 and S12 plays an important role in translational accuracy. Located at the back of the 30S subunit body where it stabilizes the conformation of the head with respect to the body. The sequence is that of Small ribosomal subunit protein uS5 from Mycoplasma pneumoniae (strain ATCC 29342 / M129 / Subtype 1) (Mycoplasmoides pneumoniae).